The primary structure comprises 447 residues: N-succinylarginine dihydrolase (447 aa).

Substrate-binding positions include 19-28 (AGLSFGNEAS), asparagine 110, and 137-138 (HR). Glutamate 174 is an active-site residue. Arginine 214 is a binding site for substrate. The active site involves histidine 250. Substrate contacts are provided by aspartate 252 and asparagine 365. Residue cysteine 371 is the Nucleophile of the active site.

The protein belongs to the succinylarginine dihydrolase family. In terms of assembly, homodimer.

The catalysed reaction is N(2)-succinyl-L-arginine + 2 H2O + 2 H(+) = N(2)-succinyl-L-ornithine + 2 NH4(+) + CO2. It participates in amino-acid degradation; L-arginine degradation via AST pathway; L-glutamate and succinate from L-arginine: step 2/5. Its function is as follows. Catalyzes the hydrolysis of N(2)-succinylarginine into N(2)-succinylornithine, ammonia and CO(2). The sequence is that of N-succinylarginine dihydrolase from Acinetobacter baumannii (strain ACICU).